Here is a 319-residue protein sequence, read N- to C-terminus: sn-1-specific diacylglycerol lipase ABHD11 (319 aa).

The transit peptide at 1-28 (MTLKLAVLRQIFQGSKGWHLWQHWRAFY) directs the protein to the mitochondrion. Residues 69–304 (PPLVLLHGLF…GAGHWVHADK (236 aa)) enclose the AB hydrolase-1 domain. Catalysis depends on charge relay system residues S143, E239, and H298.

Belongs to the AB hydrolase superfamily. In terms of processing, phosphorylated.

It is found in the mitochondrion. The protein localises to the mitochondrion matrix. The enzyme catalyses 1-octadecanoyl-2-(5Z,8Z,11Z,14Z-eicosatetraenoyl)-sn-glycerol + H2O = 2-(5Z,8Z,11Z,14Z-eicosatetraenoyl)-glycerol + octadecanoate + H(+). It carries out the reaction a 1,2-diacyl-sn-glycerol + H2O = a 2-acylglycerol + a fatty acid + H(+). It catalyses the reaction a 1,3-diacyl-sn-glycerol + H2O = a 1-acyl-sn-glycerol + a fatty acid + H(+). The catalysed reaction is 1-octadecanoyl-2-(9Z-octadecenoyl)-sn-glycerol + H2O = 2-(9Z-octadecenoyl)-glycerol + octadecanoate + H(+). The enzyme catalyses 1-octadecanoyl-2-(4Z,7Z,10Z,13Z,16Z,19Z-docosahexaenoyl)-sn-glycerol + H2O = 2-(4Z,7Z,10Z,13Z,16Z,19Z-docosahexaenoyl)-glycerol + octadecanoate + H(+). It carries out the reaction 1,2-didecanoylglycerol + H2O = decanoylglycerol + decanoate + H(+). In terms of biological role, catalyzes the hydrolysis of diacylglycerol in vitro and may function as a key regulator in lipid metabolism, namely by regulating the intracellular levels of diacylglycerol. 1,2-diacyl-sn-glycerols are the preferred substrate over 1,3-diacyl-sn-glycerols. The enzyme hydrolyzes stearate in preference to palmitate from the sn-1 position of 1,2-diacyl-sn-glycerols. The polypeptide is sn-1-specific diacylglycerol lipase ABHD11 (Xenopus tropicalis (Western clawed frog)).